The chain runs to 307 residues: Chlorophyll a-b binding protein 1, chloroplastic (307 aa).

Residues 1-44 (MAPYSVVASVLAAAPPQQSGSVRQLPSTINRAITQRSQSRHVAS) constitute a chloroplast transit peptide. Residues 34 to 54 (TQRSQSRHVASASSASSPTTM) are disordered. Residues threonine 52, glutamate 63, isoleucine 64, glycine 65, tyrosine 68, leucine 81, proline 86, arginine 89, glycine 90, phenylalanine 91, and aspartate 92 each contribute to the chlorophyll a site. Leucine 96 serves as a coordination point for loroxanthin. A helical membrane pass occupies residues 111 to 143 (NYDESRLRWLLEGELYNGRLAMLAVVGVLTVEA). Residues leucine 120, glutamate 124, asparagine 127, methionine 132, and lysine 146 each contribute to the chlorophyll a site. Tryptophan 149 is a loroxanthin binding site. The chlorophyll a site is built by glutamate 151, tyrosine 163, histidine 171, glutamate 178, arginine 181, glutamate 190, arginine 198, and aspartate 200. A helical transmembrane segment spans residues 161-186 (TPYVVAVVGGHLAFALLEKKRLENFR). All-trans-violaxanthin contacts are provided by aspartate 200 and leucine 202. Residues leucine 204, asparagine 208, tyrosine 214, asparagine 215, alanine 218, asparagine 222, and arginine 224 each contribute to the chlorophyll a site. Residues 213 to 238 (DYNRQAEVRNCRLAMLTFLGFSVQAW) form a helical membrane-spanning segment. Position 230 (phenylalanine 230) interacts with loroxanthin. Residue phenylalanine 233 participates in all-trans-violaxanthin binding. Glutamine 236 contacts chlorophyll a. Proline 244 lines the all-trans-violaxanthin pocket. Positions 247, 251, 255, 256, 258, 259, 260, and 274 each coordinate chlorophyll a. Residues 265 to 289 (DRGTNVVAIFSAFAAVMHIAELARE) form a helical membrane-spanning segment.

This sequence belongs to the light-harvesting chlorophyll a/b-binding (LHC) protein family. Homooligomer. Component of a light-harvesting complex (LHC) consisting of 11 chlorophyll a-b binding proteins. Requires Binds 11 chlorophylls (Chl-a and Chl-b) and the 2 carotenoids violaxanthin and loroxanthin. as cofactor.

Its subcellular location is the plastid. It localises to the chloroplast thylakoid membrane. In terms of biological role, component of a light-harvesting complex (LHC). The LHC functions as a light receptor, it captures and delivers excitation energy to photosystems with which it is closely associated. Functions in a far-red LHC by absorbing far-red light and promoting photosystem II (PSII) excitation, likely with entropy-driven uphill excitation energy transfer. Exhibits a typical absorption band at 671 nm (Qy band), as well as a large far-red absorption band at 706.5 together with fluorescence emission at around 713 nm (F713). This Prasiola crispa (Green alga) protein is Chlorophyll a-b binding protein 1, chloroplastic.